The sequence spans 369 residues: Peptide chain release factor 1 (369 aa).

The residue at position 234 (Gln234) is an N5-methylglutamine.

Belongs to the prokaryotic/mitochondrial release factor family. Methylated by PrmC. Methylation increases the termination efficiency of RF1.

Its subcellular location is the cytoplasm. Peptide chain release factor 1 directs the termination of translation in response to the peptide chain termination codons UAG and UAA. This Kocuria rhizophila (strain ATCC 9341 / DSM 348 / NBRC 103217 / DC2201) protein is Peptide chain release factor 1.